Consider the following 402-residue polypeptide: Phosphopentomutase (402 aa).

Residues D10, D301, H306, D342, H343, and H354 each coordinate Mn(2+).

The protein belongs to the phosphopentomutase family. It depends on Mn(2+) as a cofactor.

The protein resides in the cytoplasm. The catalysed reaction is 2-deoxy-alpha-D-ribose 1-phosphate = 2-deoxy-D-ribose 5-phosphate. It carries out the reaction alpha-D-ribose 1-phosphate = D-ribose 5-phosphate. It participates in carbohydrate degradation; 2-deoxy-D-ribose 1-phosphate degradation; D-glyceraldehyde 3-phosphate and acetaldehyde from 2-deoxy-alpha-D-ribose 1-phosphate: step 1/2. Its function is as follows. Isomerase that catalyzes the conversion of deoxy-ribose 1-phosphate (dRib-1-P) and ribose 1-phosphate (Rib-1-P) to deoxy-ribose 5-phosphate (dRib-5-P) and ribose 5-phosphate (Rib-5-P), respectively. This chain is Phosphopentomutase, found in Aeromonas salmonicida (strain A449).